Consider the following 242-residue polypeptide: uncharacterized protein (242 aa).

The region spanning 17-85 is the HTH gntR-type domain; sequence QRVDERIATT…HGSGSVVRDP (69 aa). A DNA-binding region (H-T-H motif) is located at residues 45–64; the sequence is ERDLAERLGVNRTSLRQGLA.

This is an uncharacterized protein from Mycobacterium tuberculosis (strain ATCC 25618 / H37Rv).